We begin with the raw amino-acid sequence, 691 residues long: Elongation factor G (691 aa).

The 276-residue stretch at 8 to 283 (KKVRNIGIAA…AVVAYLPAPD (276 aa)) folds into the tr-type G domain. GTP contacts are provided by residues 17–24 (AHIDAGKT), 81–85 (DTPGH), and 135–138 (NKMD).

It belongs to the TRAFAC class translation factor GTPase superfamily. Classic translation factor GTPase family. EF-G/EF-2 subfamily.

The protein localises to the cytoplasm. Functionally, catalyzes the GTP-dependent ribosomal translocation step during translation elongation. During this step, the ribosome changes from the pre-translocational (PRE) to the post-translocational (POST) state as the newly formed A-site-bound peptidyl-tRNA and P-site-bound deacylated tRNA move to the P and E sites, respectively. Catalyzes the coordinated movement of the two tRNA molecules, the mRNA and conformational changes in the ribosome. The sequence is that of Elongation factor G from Campylobacter jejuni subsp. doylei (strain ATCC BAA-1458 / RM4099 / 269.97).